The following is a 304-amino-acid chain: 1D-myo-inositol 2-acetamido-2-deoxy-alpha-D-glucopyranoside deacetylase 2 (304 aa).

3 residues coordinate Zn(2+): histidine 17, aspartate 20, and histidine 152.

Belongs to the MshB deacetylase family. Zn(2+) is required as a cofactor.

The enzyme catalyses 1D-myo-inositol 2-acetamido-2-deoxy-alpha-D-glucopyranoside + H2O = 1D-myo-inositol 2-amino-2-deoxy-alpha-D-glucopyranoside + acetate. In terms of biological role, catalyzes the deacetylation of 1D-myo-inositol 2-acetamido-2-deoxy-alpha-D-glucopyranoside (GlcNAc-Ins) in the mycothiol biosynthesis pathway. This chain is 1D-myo-inositol 2-acetamido-2-deoxy-alpha-D-glucopyranoside deacetylase 2, found in Catenulispora acidiphila (strain DSM 44928 / JCM 14897 / NBRC 102108 / NRRL B-24433 / ID139908).